Reading from the N-terminus, the 511-residue chain is D-alanine--D-alanyl carrier protein ligase (511 aa).

152–153 (TS) serves as a coordination point for ATP. D199 is a D-alanine binding site. Residue 294–299 (NAYGPT) participates in ATP binding. V303 contacts D-alanine. ATP is bound by residues D385, 397 to 400 (YGGR), and K499. Residue K499 participates in D-alanine binding.

This sequence belongs to the ATP-dependent AMP-binding enzyme family. DltA subfamily.

It localises to the cytoplasm. It catalyses the reaction holo-[D-alanyl-carrier protein] + D-alanine + ATP = D-alanyl-[D-alanyl-carrier protein] + AMP + diphosphate. Its pathway is cell wall biogenesis; lipoteichoic acid biosynthesis. Catalyzes the first step in the D-alanylation of lipoteichoic acid (LTA), the activation of D-alanine and its transfer onto the D-alanyl carrier protein (Dcp) DltC. In an ATP-dependent two-step reaction, forms a high energy D-alanyl-AMP intermediate, followed by transfer of the D-alanyl residue as a thiol ester to the phosphopantheinyl prosthetic group of the Dcp. D-alanylation of LTA plays an important role in modulating the properties of the cell wall in Gram-positive bacteria, influencing the net charge of the cell wall. This Streptococcus agalactiae serotype III (strain NEM316) protein is D-alanine--D-alanyl carrier protein ligase.